We begin with the raw amino-acid sequence, 389 residues long: Formate-dependent phosphoribosylglycinamide formyltransferase (389 aa).

Residues 21-22 (EL) and glutamate 81 each bind N(1)-(5-phospho-beta-D-ribosyl)glycinamide. ATP contacts are provided by residues arginine 113, lysine 154, 159 to 164 (SSGKGQ), 194 to 197 (EEFI), and glutamate 202. The ATP-grasp domain occupies 118-307 (RLAAEKLGLK…EFEIHVRAIL (190 aa)). Glutamate 266 and glutamate 278 together coordinate Mg(2+). N(1)-(5-phospho-beta-D-ribosyl)glycinamide contacts are provided by residues aspartate 285, lysine 353, and 360–361 (RR).

The protein belongs to the PurK/PurT family. Homodimer.

It catalyses the reaction N(1)-(5-phospho-beta-D-ribosyl)glycinamide + formate + ATP = N(2)-formyl-N(1)-(5-phospho-beta-D-ribosyl)glycinamide + ADP + phosphate + H(+). It functions in the pathway purine metabolism; IMP biosynthesis via de novo pathway; N(2)-formyl-N(1)-(5-phospho-D-ribosyl)glycinamide from N(1)-(5-phospho-D-ribosyl)glycinamide (formate route): step 1/1. Its function is as follows. Involved in the de novo purine biosynthesis. Catalyzes the transfer of formate to 5-phospho-ribosyl-glycinamide (GAR), producing 5-phospho-ribosyl-N-formylglycinamide (FGAR). Formate is provided by PurU via hydrolysis of 10-formyl-tetrahydrofolate. The protein is Formate-dependent phosphoribosylglycinamide formyltransferase of Methanocaldococcus jannaschii (strain ATCC 43067 / DSM 2661 / JAL-1 / JCM 10045 / NBRC 100440) (Methanococcus jannaschii).